The chain runs to 172 residues: Peptidyl-prolyl cis-trans isomerase CYP18-4 (172 aa).

The PPIase cyclophilin-type domain maps to 7–170 (FFDMSLSGTP…KVVTITDCGQ (164 aa)).

The protein belongs to the cyclophilin-type PPIase family. In terms of assembly, interacts with A.tumefaciens VirD2. In terms of tissue distribution, ubiquitous, with higher levels in roots and flowers. Confined to vascular tissues. Also detected in stigmas, base of siliques and anthers.

Its subcellular location is the cytoplasm. It catalyses the reaction [protein]-peptidylproline (omega=180) = [protein]-peptidylproline (omega=0). Its activity is regulated as follows. Binds cyclosporin A (CsA). CsA mediates some of its effects via an inhibitory action on PPIase. In terms of biological role, PPIases accelerate the folding of proteins. It catalyzes the cis-trans isomerization of proline imidic peptide bonds in oligopeptides. The sequence is that of Peptidyl-prolyl cis-trans isomerase CYP18-4 (CYP18-4) from Arabidopsis thaliana (Mouse-ear cress).